The following is a 317-amino-acid chain: Methionyl-tRNA formyltransferase (317 aa).

(6S)-5,6,7,8-tetrahydrofolate is bound at residue 112–115; it reads SLLP.

The protein belongs to the Fmt family.

The catalysed reaction is L-methionyl-tRNA(fMet) + (6R)-10-formyltetrahydrofolate = N-formyl-L-methionyl-tRNA(fMet) + (6S)-5,6,7,8-tetrahydrofolate + H(+). Functionally, attaches a formyl group to the free amino group of methionyl-tRNA(fMet). The formyl group appears to play a dual role in the initiator identity of N-formylmethionyl-tRNA by promoting its recognition by IF2 and preventing the misappropriation of this tRNA by the elongation apparatus. This is Methionyl-tRNA formyltransferase from Geobacter sulfurreducens (strain ATCC 51573 / DSM 12127 / PCA).